The chain runs to 436 residues: MAGGTLYTYPDNWRAYKPLIAAQYSGFPIKVASSAPEFQFGVTNKTPEFLKKFPLGKVPAFEGKDGFCLFESSAIAHYVGNDELRGTTRLHQAQVIQWVSFSDSHIVPPASAWVFPTLGIMQYNKQATEQAKEGIKTVLGVLDSHLQTRTFLVGERITLADITVTCSLLWLYKQVLEPSFRQPFGNVTRWFVTCVNQPEFRAVLGEVKLCDKMAQFDAKKFAEMQPKKETPKKEKPAKEPKKEKEEKKKAAPTPAPAPEDDLDESEKALAAEPKSKDPYAHLPKSSFIMDEFKRKYSNEDTLTVALPYFWEHFDKEGWSIWYAEYKFPEELTQAFMSCNLITGMFQRLDKLRKTGFASVILFGTNNNSSISGVWVFRGQDLAFTLSEDWQIDYESYNWRKLDSGSEECKTLVKEYFAWEGEFKNVGKPFNQGKIFK.

The region spanning 2-87 is the GST N-terminal domain; that stretch reads AGGTLYTYPD…YVGNDELRGT (86 aa). Residues 88–221 form the GST C-terminal domain; that stretch reads TRLHQAQVIQ…KMAQFDAKKF (134 aa). Basic and acidic residues-rich tracts occupy residues 221-249 and 265-278; these read FAEM…EKKK and SEKA…SKDP. The segment at 221–278 is disordered; the sequence is FAEMQPKKETPKKEKPAKEPKKEKEEKKKAAPTPAPAPEDDLDESEKALAAEPKSKDP. The EF-1-gamma C-terminal domain occupies 275-436; sequence SKDPYAHLPK…KPFNQGKIFK (162 aa).

In terms of assembly, EF-1 is composed of four subunits: alpha, beta, delta, and gamma. Post-translationally, phosphorylated by CDK1. The N-terminus is blocked.

Probably plays a role in anchoring the complex to other cellular components. This is Elongation factor 1-gamma-A (eef1g-a) from Xenopus laevis (African clawed frog).